The following is a 307-amino-acid chain: ATP-dependent (S)-NAD(P)H-hydrate dehydratase (307 aa).

In terms of domain architecture, YjeF C-terminal spans 1-291 (MDHFLKLLPK…DEIPKLVRDV (291 aa)). (6S)-NADPHX is bound by residues G96 and 150 to 156 (NIVEFSR). Residues 194-198 (KGEVD) and 214-223 (SSLRRCGGQG) each bind ATP. D224 is a (6S)-NADPHX binding site.

The protein belongs to the NnrD/CARKD family. It depends on Mg(2+) as a cofactor.

The enzyme catalyses (6S)-NADHX + ATP = ADP + phosphate + NADH + H(+). It carries out the reaction (6S)-NADPHX + ATP = ADP + phosphate + NADPH + H(+). Catalyzes the dehydration of the S-form of NAD(P)HX at the expense of ATP, which is converted to ADP. Together with NAD(P)HX epimerase, which catalyzes the epimerization of the S- and R-forms, the enzyme allows the repair of both epimers of NAD(P)HX, a damaged form of NAD(P)H that is a result of enzymatic or heat-dependent hydration. This is ATP-dependent (S)-NAD(P)H-hydrate dehydratase from Caenorhabditis briggsae.